We begin with the raw amino-acid sequence, 290 residues long: Enoyl-CoA hydratase, mitochondrial (290 aa).

A mitochondrion-targeting transit peptide spans methionine 1–phenylalanine 27. A Phosphothreonine modification is found at threonine 46. Alanine 98–lysine 101 lines the substrate pocket. Position 101 is an N6-acetyllysine; alternate (lysine 101). Lysine 101 is subject to N6-succinyllysine; alternate. Serine 114 carries the phosphoserine modification. Residue lysine 115 is modified to N6-acetyllysine; alternate. Residue lysine 115 is modified to N6-succinyllysine; alternate. Lysine 118 is subject to N6-acetyllysine. Glycine 141 lines the substrate pocket. The residue at position 204 (lysine 204) is an N6-succinyllysine. Lysine 211 bears the N6-acetyllysine mark.

It belongs to the enoyl-CoA hydratase/isomerase family. Homohexamer; dimer of trimers. In terms of tissue distribution, liver, fibroblast, muscle. Barely detectable in spleen and kidney.

It is found in the mitochondrion matrix. It carries out the reaction a (3S)-3-hydroxyacyl-CoA = a (2E)-enoyl-CoA + H2O. The enzyme catalyses a (3E)-enoyl-CoA = a 4-saturated (2E)-enoyl-CoA. The catalysed reaction is (3E)-hexenoyl-CoA = (2E)-hexenoyl-CoA. It catalyses the reaction (3S)-3-hydroxybutanoyl-CoA = (2E)-butenoyl-CoA + H2O. It carries out the reaction 3-hydroxyisovaleryl-CoA = 3-methylbut-2-enoyl-CoA + H2O. The enzyme catalyses 3-hydroxypropanoyl-CoA = acryloyl-CoA + H2O. The catalysed reaction is 3-hydroxybutanoyl-CoA = (2E)-butenoyl-CoA + H2O. It catalyses the reaction 2-methylpropenoyl-CoA + H2O = (S)-3-hydroxyisobutanoyl-CoA. It carries out the reaction (3S)-hydroxyhexanoyl-CoA = (2E)-hexenoyl-CoA + H2O. The enzyme catalyses (3S)-hydroxydecanoyl-CoA = (2E)-decenoyl-CoA + H2O. It functions in the pathway lipid metabolism; fatty acid beta-oxidation. In terms of biological role, converts unsaturated trans-2-enoyl-CoA species ((2E)-enoyl-CoA) to the corresponding (3S)-3hydroxyacyl-CoA species through addition of a water molecule to the double bond. Catalyzes the hydration of medium- and short-chained fatty enoyl-CoA thioesters from 4 carbons long (C4) up to C16. Has high substrate specificity for crotonyl-CoA ((2E)-butenoyl-CoA) and moderate specificity for acryloyl-CoA, 3-methylcrotonyl-CoA (3-methyl-(2E)-butenoyl-CoA) and methacrylyl-CoA ((2E)-2-methylpropenoyl-CoA). Can bind tiglyl-CoA (2-methylcrotonoyl-CoA), but hydrates only a small amount of this substrate. Plays a key role in the beta-oxidation spiral of short- and medium-chain fatty acid oxidation. At a lower rate than the hydratase reaction, catalyzes the isomerase reaction of trans-3-enoyl-CoA species (such as (3E)-hexenoyl-CoA) to trans-2-enoyl-CoA species (such as (2E)-hexenoyl-CoA), which are subsequently hydrated to 3(S)-3-hydroxyacyl-CoA species (such as (3S)-hydroxyhexanoyl-CoA). The sequence is that of Enoyl-CoA hydratase, mitochondrial from Homo sapiens (Human).